Consider the following 189-residue polypeptide: Probable nicotinate-nucleotide adenylyltransferase (189 aa).

The protein belongs to the NadD family.

The catalysed reaction is nicotinate beta-D-ribonucleotide + ATP + H(+) = deamido-NAD(+) + diphosphate. The protein operates within cofactor biosynthesis; NAD(+) biosynthesis; deamido-NAD(+) from nicotinate D-ribonucleotide: step 1/1. In terms of biological role, catalyzes the reversible adenylation of nicotinate mononucleotide (NaMN) to nicotinic acid adenine dinucleotide (NaAD). The protein is Probable nicotinate-nucleotide adenylyltransferase of Exiguobacterium sibiricum (strain DSM 17290 / CCUG 55495 / CIP 109462 / JCM 13490 / 255-15).